Consider the following 185-residue polypeptide: Ribosome-recycling factor (185 aa).

It belongs to the RRF family.

It localises to the cytoplasm. Responsible for the release of ribosomes from messenger RNA at the termination of protein biosynthesis. May increase the efficiency of translation by recycling ribosomes from one round of translation to another. The chain is Ribosome-recycling factor from Dichelobacter nodosus (strain VCS1703A).